The primary structure comprises 161 residues: Regulator of ribonuclease activity A (161 aa).

The protein belongs to the RraA family. In terms of assembly, homotrimer. Binds to both RNA-binding sites in the C-terminal region of Rne and to RhlB.

The protein localises to the cytoplasm. Its function is as follows. Globally modulates RNA abundance by binding to RNase E (Rne) and regulating its endonucleolytic activity. Can modulate Rne action in a substrate-dependent manner by altering the composition of the degradosome. Modulates RNA-binding and helicase activities of the degradosome. This is Regulator of ribonuclease activity A from Pseudoalteromonas atlantica (strain T6c / ATCC BAA-1087).